A 467-amino-acid chain; its full sequence is MVTVRREKDSMGAIEVPADKLWGAQTQRSLEHFRISTEKMPVSLIHALALTKRAAAKVNQDLGLLAAEKASAIIQAADEVLAGKHADEFPLAIWQTGSGTQSNMNMNEVLANRASEILGGVRGMERKVHPNDDVNKSQSSNDVFPTAMHVAALLALREHLIPQLSALTDTLRDKSHAFADIVKIGRTHLQDATPLTLGQEISGWVAMLEHNLRHIEHSLPHVAELALGGTAVGTGLNTHPEYARRVAEELATITAAPFVTAPNKFEALATCDALVQAHGALKGLAASLMKIANDVRWLASGPRCGIGEIAIPENEPGSSIMPGKVNPTQCEAVTMLCCQVMGNDVAINMGGASGNFELNVYRPMVIHNFLQTVRLLADGMESFNKHCASGIEPNRERITQLLNESLMLVTALNTHIGYDKAAEIAKKAHKEGLTLKASAVALGYLSDEEFDAWVRPELMVGSMTPGR.

Residues 98 to 100 (SGT), R126, 129 to 132 (HPND), 139 to 141 (SSN), and T187 contribute to the substrate site. Catalysis depends on H188, which acts as the Proton donor/acceptor. Residue S318 is part of the active site. Residues S319 and 324 to 326 (KVN) each bind substrate.

The protein belongs to the class-II fumarase/aspartase family. Fumarase subfamily. In terms of assembly, homotetramer.

It localises to the cytoplasm. The catalysed reaction is (S)-malate = fumarate + H2O. It functions in the pathway carbohydrate metabolism; tricarboxylic acid cycle; (S)-malate from fumarate: step 1/1. In terms of biological role, involved in the TCA cycle. Catalyzes the stereospecific interconversion of fumarate to L-malate. The protein is Fumarate hydratase class II of Salmonella typhimurium (strain LT2 / SGSC1412 / ATCC 700720).